A 171-amino-acid chain; its full sequence is tRNA-splicing endonuclease (171 aa).

Residues Tyr-110, His-117, and Lys-148 contribute to the active site.

Belongs to the tRNA-intron endonuclease family. Archaeal short subfamily. In terms of assembly, homotetramer; although the tetramer contains four active sites, only two participate in the cleavage. Therefore, it should be considered as a dimer of dimers.

The enzyme catalyses pretRNA = a 3'-half-tRNA molecule with a 5'-OH end + a 5'-half-tRNA molecule with a 2',3'-cyclic phosphate end + an intron with a 2',3'-cyclic phosphate and a 5'-hydroxyl terminus.. Its function is as follows. Endonuclease that removes tRNA introns. Cleaves pre-tRNA at the 5'- and 3'-splice sites to release the intron. The products are an intron and two tRNA half-molecules bearing 2',3' cyclic phosphate and 5'-OH termini. Recognizes a pseudosymmetric substrate in which 2 bulged loops of 3 bases are separated by a stem of 4 bp. The polypeptide is tRNA-splicing endonuclease (Thermococcus onnurineus (strain NA1)).